Here is a 264-residue protein sequence, read N- to C-terminus: Glucosamine-6-phosphate deaminase (264 aa).

Aspartate 67 acts as the Proton acceptor; for enolization step in catalysis. The active-site For ring-opening step is the asparagine 136. Residue histidine 138 is the Proton acceptor; for ring-opening step of the active site. The active-site For ring-opening step is glutamate 143.

Belongs to the glucosamine/galactosamine-6-phosphate isomerase family. NagB subfamily. As to quaternary structure, homohexamer.

The enzyme catalyses alpha-D-glucosamine 6-phosphate + H2O = beta-D-fructose 6-phosphate + NH4(+). It participates in amino-sugar metabolism; N-acetylneuraminate degradation; D-fructose 6-phosphate from N-acetylneuraminate: step 5/5. Functionally, catalyzes the reversible isomerization-deamination of glucosamine 6-phosphate (GlcN6P) to form fructose 6-phosphate (Fru6P) and ammonium ion. The polypeptide is Glucosamine-6-phosphate deaminase (Shewanella woodyi (strain ATCC 51908 / MS32)).